The chain runs to 502 residues: Type II methyltransferase M.HincII (502 aa).

It belongs to the N(4)/N(6)-methyltransferase family.

It catalyses the reaction a 2'-deoxyadenosine in DNA + S-adenosyl-L-methionine = an N(6)-methyl-2'-deoxyadenosine in DNA + S-adenosyl-L-homocysteine + H(+). A gamma subtype methylase that recognizes the double-stranded sequence 5'-GTYRAC-3', methylates A-5 on both strands, and protects the DNA from cleavage by the HincII endonuclease. This Haemophilus influenzae protein is Type II methyltransferase M.HincII.